The primary structure comprises 253 residues: Tabinhibitin 3 (253 aa).

The first 22 residues, 1-22 (MTLKRIFCAALALIVLQSVASA), serve as a signal peptide directing secretion. Positions 66–209 (LQKTNWLRGV…LKRALFTCNF (144 aa)) constitute an SCP domain. Residues 222–224 (RGD) carry the Cell attachment site motif.

It belongs to the CRISP family. Expressed in salivary glands.

It localises to the secreted. Its function is as follows. Inhibits platelet aggregation induced by all agonists tested (ADP, arachidonic acid, the thromboxane A2 analog U46619, thrombin, and snake venom snaclecs (TMVA that activates platelet through GPIB, and stejnulxin that specifically acts through GPVI (GP6))). May act by competing with fibrinogen for binding to glycoprotein IIb/IIIa (ITGA2B/ITGB3). The polypeptide is Tabinhibitin 3 (Tabanus yao (Horsefly)).